The primary structure comprises 85 residues: Large ribosomal subunit protein bL27 (85 aa).

The segment at 1–20 (MATKKAGGSTRNGRDSEAKR) is disordered.

Belongs to the bacterial ribosomal protein bL27 family.

This is Large ribosomal subunit protein bL27 from Glaesserella parasuis serovar 5 (strain SH0165) (Haemophilus parasuis).